The following is a 696-amino-acid chain: Elongation factor G (696 aa).

A tr-type G domain is found at 8 to 286 (EDVRNIGIAA…AVVHYLPSPV (279 aa)). GTP is bound by residues 17-24 (AHIDAGKT), 81-85 (DTPGH), and 135-138 (NKMD).

Belongs to the TRAFAC class translation factor GTPase superfamily. Classic translation factor GTPase family. EF-G/EF-2 subfamily.

Its subcellular location is the cytoplasm. In terms of biological role, catalyzes the GTP-dependent ribosomal translocation step during translation elongation. During this step, the ribosome changes from the pre-translocational (PRE) to the post-translocational (POST) state as the newly formed A-site-bound peptidyl-tRNA and P-site-bound deacylated tRNA move to the P and E sites, respectively. Catalyzes the coordinated movement of the two tRNA molecules, the mRNA and conformational changes in the ribosome. This is Elongation factor G from Sulfurovum sp. (strain NBC37-1).